A 149-amino-acid chain; its full sequence is Protein-export protein SecB (149 aa).

Belongs to the SecB family. As to quaternary structure, homotetramer, a dimer of dimers. One homotetramer interacts with 1 SecA dimer.

The protein localises to the cytoplasm. In terms of biological role, one of the proteins required for the normal export of preproteins out of the cell cytoplasm. It is a molecular chaperone that binds to a subset of precursor proteins, maintaining them in a translocation-competent state. It also specifically binds to its receptor SecA. This is Protein-export protein SecB from Acidithiobacillus ferrooxidans (strain ATCC 23270 / DSM 14882 / CIP 104768 / NCIMB 8455) (Ferrobacillus ferrooxidans (strain ATCC 23270)).